A 500-amino-acid polypeptide reads, in one-letter code: Aldehyde dehydrogenase (500 aa).

246–251 (GSTLVG) contacts NAD(+). The Proton acceptor role is filled by glutamate 269. Cysteine 303 serves as the catalytic Nucleophile.

This sequence belongs to the aldehyde dehydrogenase family.

It catalyses the reaction an aldehyde + NAD(+) + H2O = a carboxylate + NADH + 2 H(+). The protein operates within alcohol metabolism; ethanol degradation; acetate from ethanol: step 2/2. The polypeptide is Aldehyde dehydrogenase (aldA) (Agaricus bisporus (White button mushroom)).